The following is an 800-amino-acid chain: Phenylalanine--tRNA ligase beta subunit (800 aa).

The 116-residue stretch at 39–154 (TKDIKNLVVG…EAQVPGTDAL (116 aa)) folds into the tRNA-binding domain. In terms of domain architecture, B5 spans 408–483 (AFITPIDITA…RIYGYDDIPS (76 aa)). Residues aspartate 461, aspartate 467, glutamate 470, and glutamate 471 each contribute to the Mg(2+) site. Positions 708 to 800 (PRFPGMSRDI…ALIEQGAVIR (93 aa)) constitute an FDX-ACB domain.

It belongs to the phenylalanyl-tRNA synthetase beta subunit family. Type 1 subfamily. In terms of assembly, tetramer of two alpha and two beta subunits. It depends on Mg(2+) as a cofactor.

It is found in the cytoplasm. It catalyses the reaction tRNA(Phe) + L-phenylalanine + ATP = L-phenylalanyl-tRNA(Phe) + AMP + diphosphate + H(+). The polypeptide is Phenylalanine--tRNA ligase beta subunit (Staphylococcus aureus (strain COL)).